The following is a 70-amino-acid chain: Large ribosomal subunit protein bL28 (70 aa).

It belongs to the bacterial ribosomal protein bL28 family.

The chain is Large ribosomal subunit protein bL28 from Maridesulfovibrio salexigens (strain ATCC 14822 / DSM 2638 / NCIMB 8403 / VKM B-1763) (Desulfovibrio salexigens).